A 165-amino-acid chain; its full sequence is Ribosome maturation factor RimM (165 aa).

The 73-residue stretch at 89–161 (EADTHYIVDL…KIVVKPVRQW (73 aa)) folds into the PRC barrel domain.

Belongs to the RimM family. As to quaternary structure, binds ribosomal protein uS19.

The protein localises to the cytoplasm. Its function is as follows. An accessory protein needed during the final step in the assembly of 30S ribosomal subunit, possibly for assembly of the head region. Essential for efficient processing of 16S rRNA. May be needed both before and after RbfA during the maturation of 16S rRNA. It has affinity for free ribosomal 30S subunits but not for 70S ribosomes. In Clostridium botulinum (strain Alaska E43 / Type E3), this protein is Ribosome maturation factor RimM.